Reading from the N-terminus, the 363-residue chain is Peptide chain release factor 2 (363 aa).

An N5-methylglutamine modification is found at Gln251.

It belongs to the prokaryotic/mitochondrial release factor family. Post-translationally, methylated by PrmC. Methylation increases the termination efficiency of RF2.

The protein localises to the cytoplasm. In terms of biological role, peptide chain release factor 2 directs the termination of translation in response to the peptide chain termination codons UGA and UAA. This chain is Peptide chain release factor 2, found in Helicobacter pylori (strain HPAG1).